The primary structure comprises 591 residues: Splicing factor U2af large subunit A (591 aa).

Residues 1–215 are disordered; the sequence is MAEHDAPPES…QSKRMSGFDQ (215 aa). The segment covering 27-36 has biased composition (polar residues); sequence SPQQDAQPLS. 2 stretches are compositionally biased toward basic and acidic residues: residues 37 to 79 and 157 to 191; these read SRDR…SRDR and RERSERREHRDRSDDRDYRRSCDRDAERRDRDRDG. RRM domains follow at residues 272-355 and 392-470; these read RRVY…RPTD and DRIF…RANQ.

It belongs to the splicing factor SR family.

The protein localises to the nucleus. In terms of biological role, necessary for the splicing of pre-mRNA. This is Splicing factor U2af large subunit A (U2AF65A) from Triticum aestivum (Wheat).